Reading from the N-terminus, the 277-residue chain is 3-methyl-2-oxobutanoate hydroxymethyltransferase (277 aa).

Mg(2+) is bound by residues aspartate 53 and aspartate 96. 3-methyl-2-oxobutanoate is bound by residues 53 to 54 (DS), aspartate 96, and lysine 126. Glutamate 128 lines the Mg(2+) pocket. The active-site Proton acceptor is glutamate 195.

Belongs to the PanB family. Homodecamer; pentamer of dimers. Mg(2+) is required as a cofactor.

It is found in the cytoplasm. It carries out the reaction 3-methyl-2-oxobutanoate + (6R)-5,10-methylene-5,6,7,8-tetrahydrofolate + H2O = 2-dehydropantoate + (6S)-5,6,7,8-tetrahydrofolate. It participates in cofactor biosynthesis; (R)-pantothenate biosynthesis; (R)-pantoate from 3-methyl-2-oxobutanoate: step 1/2. Functionally, catalyzes the reversible reaction in which hydroxymethyl group from 5,10-methylenetetrahydrofolate is transferred onto alpha-ketoisovalerate to form ketopantoate. The protein is 3-methyl-2-oxobutanoate hydroxymethyltransferase of Chlorobium phaeobacteroides (strain DSM 266 / SMG 266 / 2430).